The following is an 831-amino-acid chain: Probable glucan 1,3-beta-glucosidase D (831 aa).

Basic and acidic residues-rich tracts occupy residues 1–24 (MPSH…YREV), 44–56 (RRDD…RSHE), 79–93 (RSHD…RSRA), 102–115 (SRRD…EYRR), 137–151 (RDGQ…DREA), and 198–213 (QRER…LESK). Disordered regions lie at residues 1–179 (MPSH…SGSH) and 192–241 (HYDE…GQSK). Residues 1–297 (MPSHSRSRDR…AQPPFWKRKK (297 aa)) are Cytoplasmic-facing. A helical; Signal-anchor for type II membrane protein transmembrane segment spans residues 298–318 (WWIVIGVLVVVLAIVIPVAVV). Residues 319-831 (MSKKHGHDDD…PSFGDLPEYY (513 aa)) lie on the Extracellular side of the membrane. Residues Asn-376, Asn-381, Asn-393, Asn-410, Asn-442, Asn-546, and Asn-558 are each glycosylated (N-linked (GlcNAc...) asparagine). The Proton donor role is filled by Glu-597. N-linked (GlcNAc...) asparagine glycosylation is found at Asn-610, Asn-636, Asn-669, and Asn-689. Catalysis depends on Glu-702, which acts as the Nucleophile.

Belongs to the glycosyl hydrolase 5 (cellulase A) family.

The protein resides in the cell membrane. It carries out the reaction Successive hydrolysis of beta-D-glucose units from the non-reducing ends of (1-&gt;3)-beta-D-glucans, releasing alpha-glucose.. In terms of biological role, glucosidase involved in the degradation of cellulosic biomass. Active on lichenan. This is Probable glucan 1,3-beta-glucosidase D (exgD) from Aspergillus flavus (strain ATCC 200026 / FGSC A1120 / IAM 13836 / NRRL 3357 / JCM 12722 / SRRC 167).